Here is a 549-residue protein sequence, read N- to C-terminus: Oxygen-dependent choline dehydrogenase (549 aa).

4–33 (DFVIIGSGSAGSALAYRLSEDGANSVVVLE) is an FAD binding site. His-465 acts as the Proton acceptor in catalysis.

It belongs to the GMC oxidoreductase family. FAD serves as cofactor.

It carries out the reaction choline + A = betaine aldehyde + AH2. The catalysed reaction is betaine aldehyde + NAD(+) + H2O = glycine betaine + NADH + 2 H(+). The protein operates within amine and polyamine biosynthesis; betaine biosynthesis via choline pathway; betaine aldehyde from choline (cytochrome c reductase route): step 1/1. Its function is as follows. Involved in the biosynthesis of the osmoprotectant glycine betaine. Catalyzes the oxidation of choline to betaine aldehyde and betaine aldehyde to glycine betaine at the same rate. In Sinorhizobium medicae (strain WSM419) (Ensifer medicae), this protein is Oxygen-dependent choline dehydrogenase.